Consider the following 161-residue polypeptide: MSVLKQLSIFTDGSCLGNPGPGGYGVVMKYKAHTKELSDGFALTTNNRMELLAPIIALEALKVPCKIILTSDSQYMRQGITQWIHGWKKKNWITSTKQPVKNVDLWKRLDAATQSHEIDWHWVKGHAGHVENERCDTLARVAAEAKPTQEDLGYQPSVSSS.

An RNase H type-1 domain is found at 3 to 144 (VLKQLSIFTD…CDTLARVAAE (142 aa)). The Mg(2+) site is built by Asp-12, Glu-50, Asp-72, and Asp-136.

The protein belongs to the RNase H family. As to quaternary structure, monomer. It depends on Mg(2+) as a cofactor.

It is found in the cytoplasm. The catalysed reaction is Endonucleolytic cleavage to 5'-phosphomonoester.. In terms of biological role, endonuclease that specifically degrades the RNA of RNA-DNA hybrids. This Shewanella woodyi (strain ATCC 51908 / MS32) protein is Ribonuclease H.